Consider the following 480-residue polypeptide: GTPase Der (480 aa).

2 consecutive EngA-type G domains span residues 5-170 and 178-351; these read PVVA…PSQE and LKLA…QSSM. GTP contacts are provided by residues 11–18, 58–62, 123–126, 184–191, 231–235, and 296–299; these read GRPNVGKS, DTGGI, NKVD, DTAGV, and NKWD. One can recognise a KH-like domain in the interval 352 to 436; the sequence is FEVSTNRLTQ…PLNVVFKLNE (85 aa). Over residues 438–454 the composition is skewed to polar residues; that stretch reads PYANKSDTPTKAKTQQL. Positions 438-480 are disordered; the sequence is PYANKSDTPTKAKTQQLRQRERNRAQKFTTKDKPRFTNKDKKR. Over residues 455-480 the composition is skewed to basic and acidic residues; it reads RQRERNRAQKFTTKDKPRFTNKDKKR.

It belongs to the TRAFAC class TrmE-Era-EngA-EngB-Septin-like GTPase superfamily. EngA (Der) GTPase family. As to quaternary structure, associates with the 50S ribosomal subunit.

Its function is as follows. GTPase that plays an essential role in the late steps of ribosome biogenesis. In Psychrobacter cryohalolentis (strain ATCC BAA-1226 / DSM 17306 / VKM B-2378 / K5), this protein is GTPase Der.